A 380-amino-acid polypeptide reads, in one-letter code: MAIILRSSDPLLSRIHPEPQEIDHFDNLPDSILLLIFNNIGDVKALGRCSVVSKRFHSLIPQVENVFVRVDCVISDDDSSSLLSDKPRSASAASPFSAIFRLVFKPLQALGQFLKRSGSSSLPSGSSPSSLLISGGDDGEIEQGGVTHHSPTQVLKNFDEIKFLKIELPSGELGIDDGVLLKWRAEFGSTLENCVILGASSVIPPTNSDKTEASSAPVAAVEDNGSIPESFYTNGGLKLRVVWTISSLIAASARHYLLQPIIAEHKTLDSLVLTDVDGQGVLCMNRDQLEELRVKPLSASSASKRTLVPALNMRLWYAPSLELPDGTVLKGATLVAIRPSESKKEVCDVSWVSSAFDEPYGVAAKMLVKRRTYCLEMNSF.

The F-box domain maps to 22–70 (IDHFDNLPDSILLLIFNNIGDVKALGRCSVVSKRFHSLIPQVENVFVRV).

In Arabidopsis thaliana (Mouse-ear cress), this protein is F-box protein At4g18380.